The sequence spans 265 residues: Gap junction beta-4 protein (265 aa).

Residues Asn-2–Val-13 lie within the membrane without spanning it. The Cytoplasmic portion of the chain corresponds to Asn-14 to Leu-20. Residues Gly-21–Ala-40 traverse the membrane as a helical segment. The Extracellular segment spans residues Glu-41–His-73. 3 disulfides stabilise this stretch: Cys-53–Cys-175, Cys-60–Cys-169, and Cys-64–Cys-164. The helical transmembrane segment at Val-74 to His-94 threads the bilayer. Over Val-95–Thr-130 the chain is Cytoplasmic. Residues Tyr-131–Cys-151 form a helical membrane-spanning segment. The Extracellular portion of the chain corresponds to Ile-152 to Lys-184. The helical transmembrane segment at Val-185–Val-205 threads the bilayer. At Ala-206 to Pro-265 the chain is on the cytoplasmic side.

The protein belongs to the connexin family. Beta-type (group I) subfamily. In terms of assembly, a hemichannel or connexon is composed of a hexamer of connexins. A functional gap junction is formed by the apposition of two hemichannels. Forms heteromeric channels with GJB2. In terms of tissue distribution, detected in adult heart, kidney, skin and cochlea, where it is detected in spiral ganglion, stria vascularis, spiral limbus and spiral ligament (at protein level).

It is found in the cell membrane. The protein localises to the cell junction. The protein resides in the gap junction. In terms of biological role, structural component of gap junctions. Gap junctions are dodecameric channels that connect the cytoplasm of adjoining cells. They are formed by the docking of two hexameric hemichannels, one from each cell membrane. Small molecules and ions diffuse from one cell to a neighboring cell via the central pore. This Rattus norvegicus (Rat) protein is Gap junction beta-4 protein (Gjb4).